Consider the following 263-residue polypeptide: uncharacterized protein (263 aa).

Residues 198–224 (KRSSDSFVSLKPGEDEHSPLEISTCGN) are disordered.

This is an uncharacterized protein from Saccharomyces cerevisiae (strain ATCC 204508 / S288c) (Baker's yeast).